The sequence spans 395 residues: Multidrug resistance protein MdtL (395 aa).

The Cytoplasmic segment spans residues 1 to 3 (MKR). A helical transmembrane segment spans residues 4 to 24 (FLLCSFALVLLYPAGIDMYLV). Residues 25–41 (GLPRIAVDLNASESQLH) are Periplasmic-facing. Residues 42–62 (IAFSVYLAGMATAMLFAGKIA) traverse the membrane as a helical segment. Over 63–68 (DQSGRK) the chain is Cytoplasmic. Residues 69–89 (PVAIVGAIVFMMASLLCSRAS) traverse the membrane as a helical segment. Topologically, residues 90-92 (EGS) are periplasmic. A helical membrane pass occupies residues 93-113 (LFLSGRFLQGIGAGGCYVVAF). At 114–130 (AILRDTLDEHRRAKVLS) the chain is on the cytoplasmic side. Residues 131 to 151 (LLNGITCIVPVLAPVVGHLIM) traverse the membrane as a helical segment. The Periplasmic segment spans residues 152-157 (LRFPWQ). The helical transmembrane segment at 158–178 (SLFYTMSAMGIIVGLLSLFIL) threads the bilayer. At 179–216 (RETRPVRLAPRDLSRSSPAAESLINRFFVSRLAITTLS) the chain is on the cytoplasmic side. Residues 217 to 237 (VSVILTFVNASPVLLMEVMGF) traverse the membrane as a helical segment. Residues 238–246 (SRGDYAITM) lie on the Periplasmic side of the membrane. Residues 247–267 (ALTAGVSMVVSFSTPFALGLF) form a helical membrane-spanning segment. Residues 268–270 (KPR) lie on the Cytoplasmic side of the membrane. The helical transmembrane segment at 271 to 291 (TLMLVSQGLFLTAGVTLSLAH) threads the bilayer. Over 292–294 (TNT) the chain is Periplasmic. The chain crosses the membrane as a helical span at residues 295–315 (VTLFGLTLICAGFSVGFGVAM). Residues 316 to 332 (SQALGPFSLRAGVASST) are Cytoplasmic-facing. A helical membrane pass occupies residues 333-353 (LGIAQVCGSSLWIWLAAILGI). Residues 354–357 (SAMN) are Periplasmic-facing. Residues 358–378 (MLIGILIGCSIVSILLIFSVA) traverse the membrane as a helical segment. Residues 379-395 (PNRSVAEHEEIPYQSRP) lie on the Cytoplasmic side of the membrane.

This sequence belongs to the major facilitator superfamily. DHA1 family. MdtL (TC 2.A.1.2.22) subfamily.

It is found in the cell inner membrane. This chain is Multidrug resistance protein MdtL (mdtL), found in Salmonella choleraesuis (strain SC-B67).